The following is a 103-amino-acid chain: Pyrimidine/purine nucleoside phosphorylase (103 aa).

It belongs to the nucleoside phosphorylase PpnP family.

It catalyses the reaction a purine D-ribonucleoside + phosphate = a purine nucleobase + alpha-D-ribose 1-phosphate. It carries out the reaction adenosine + phosphate = alpha-D-ribose 1-phosphate + adenine. The enzyme catalyses cytidine + phosphate = cytosine + alpha-D-ribose 1-phosphate. The catalysed reaction is guanosine + phosphate = alpha-D-ribose 1-phosphate + guanine. It catalyses the reaction inosine + phosphate = alpha-D-ribose 1-phosphate + hypoxanthine. It carries out the reaction thymidine + phosphate = 2-deoxy-alpha-D-ribose 1-phosphate + thymine. The enzyme catalyses uridine + phosphate = alpha-D-ribose 1-phosphate + uracil. The catalysed reaction is xanthosine + phosphate = alpha-D-ribose 1-phosphate + xanthine. Functionally, catalyzes the phosphorolysis of diverse nucleosides, yielding D-ribose 1-phosphate and the respective free bases. Can use uridine, adenosine, guanosine, cytidine, thymidine, inosine and xanthosine as substrates. Also catalyzes the reverse reactions. The polypeptide is Pyrimidine/purine nucleoside phosphorylase (Sulfurimonas denitrificans (strain ATCC 33889 / DSM 1251) (Thiomicrospira denitrificans (strain ATCC 33889 / DSM 1251))).